The sequence spans 335 residues: Non-structural protein P9-1 (335 aa).

Over residues 27–42 (FNANTKNQNQNTSNTQ) the composition is skewed to low complexity. The segment at 27-48 (FNANTKNQNQNTSNTQSSGGIT) is disordered.

The chain is Non-structural protein P9-1 (S9) from Fiji disease virus (isolate Sugarcane) (FDV).